The chain runs to 513 residues: GMP synthase [glutamine-hydrolyzing] (513 aa).

The Glutamine amidotransferase type-1 domain maps to 9–198 (MILVLDFGSQ…VRRICDCTGE (190 aa)). The Nucleophile role is filled by cysteine 86. Residues histidine 172 and glutamate 174 contribute to the active site. The region spanning 199-388 (WTMENFIDLE…LGIPEHLVWR (190 aa)) is the GMPS ATP-PPase domain. 226–232 (SGGVDSS) provides a ligand contact to ATP.

In terms of assembly, homodimer.

It carries out the reaction XMP + L-glutamine + ATP + H2O = GMP + L-glutamate + AMP + diphosphate + 2 H(+). It participates in purine metabolism; GMP biosynthesis; GMP from XMP (L-Gln route): step 1/1. In terms of biological role, catalyzes the synthesis of GMP from XMP. This Staphylococcus carnosus (strain TM300) protein is GMP synthase [glutamine-hydrolyzing].